The sequence spans 95 residues: ESAT-6-like protein EsxC (95 aa).

This sequence belongs to the WXG100 family. ESAT-6 subfamily.

It is found in the secreted. In Mycolicibacterium paratuberculosis (strain ATCC BAA-968 / K-10) (Mycobacterium paratuberculosis), this protein is ESAT-6-like protein EsxC.